The primary structure comprises 101 residues: Small ribosomal subunit protein uS14m (101 aa).

It belongs to the universal ribosomal protein uS14 family. As to quaternary structure, component of the mitochondrial ribosome small subunit (28S) which comprises a 12S rRNA and about 30 distinct proteins. Interacts with LIAT1.

Its subcellular location is the mitochondrion. The chain is Small ribosomal subunit protein uS14m (mrps14) from Dictyostelium citrinum (Slime mold).